The primary structure comprises 687 residues: uncharacterized protein (687 aa).

The span at 277–295 (SVCSSQSFSSGQSDISMSS) shows a compositional bias: low complexity. 3 disordered regions span residues 277–337 (SVCS…QDCD), 342–361 (DTES…SEMP), and 531–564 (HVEQ…PSLI). The segment covering 300 to 313 (NGSSVGNGSLSPMT) has biased composition (polar residues).

This is an uncharacterized protein from Caenorhabditis elegans.